The primary structure comprises 191 residues: Xanthine phosphoribosyltransferase (191 aa).

Xanthine-binding residues include L20 and N27. 128–132 provides a ligand contact to 5-phospho-alpha-D-ribose 1-diphosphate; sequence ANGQA. K156 is a xanthine binding site.

This sequence belongs to the purine/pyrimidine phosphoribosyltransferase family. Xpt subfamily. In terms of assembly, homodimer.

The protein resides in the cytoplasm. The enzyme catalyses XMP + diphosphate = xanthine + 5-phospho-alpha-D-ribose 1-diphosphate. Its pathway is purine metabolism; XMP biosynthesis via salvage pathway; XMP from xanthine: step 1/1. Converts the preformed base xanthine, a product of nucleic acid breakdown, to xanthosine 5'-monophosphate (XMP), so it can be reused for RNA or DNA synthesis. This chain is Xanthine phosphoribosyltransferase, found in Acinetobacter baylyi (strain ATCC 33305 / BD413 / ADP1).